A 460-amino-acid polypeptide reads, in one-letter code: Argininosuccinate lyase (460 aa).

This sequence belongs to the lyase 1 family. Argininosuccinate lyase subfamily.

It localises to the cytoplasm. The enzyme catalyses 2-(N(omega)-L-arginino)succinate = fumarate + L-arginine. It functions in the pathway amino-acid biosynthesis; L-arginine biosynthesis; L-arginine from L-ornithine and carbamoyl phosphate: step 3/3. The protein is Argininosuccinate lyase of Campylobacter jejuni (strain RM1221).